A 195-amino-acid chain; its full sequence is Imidazoleglycerol-phosphate dehydratase (195 aa).

The protein belongs to the imidazoleglycerol-phosphate dehydratase family.

Its subcellular location is the cytoplasm. It carries out the reaction D-erythro-1-(imidazol-4-yl)glycerol 3-phosphate = 3-(imidazol-4-yl)-2-oxopropyl phosphate + H2O. The protein operates within amino-acid biosynthesis; L-histidine biosynthesis; L-histidine from 5-phospho-alpha-D-ribose 1-diphosphate: step 6/9. This Campylobacter curvus (strain 525.92) protein is Imidazoleglycerol-phosphate dehydratase.